We begin with the raw amino-acid sequence, 671 residues long: Palmitoleoyl-protein carboxylesterase NOTUM (671 aa).

The N-terminal stretch at 1–46 (MAVEQIDKMAAKAGEATNKWIKPQQPLLTLLLLLATFSQLPAVCSS) is a signal peptide. A glycan (N-linked (GlcNAc...) asparagine) is linked at Asn-95. Residues Ser-237 and Asp-338 each act as charge relay system in the active site. Residue Asn-372 is glycosylated (N-linked (GlcNAc...) asparagine). The Charge relay system role is filled by His-384. Positions 411-592 (HSTRSRRHDK…TKSKKRHRVP (182 aa)) are disordered. Positions 439 to 454 (NQRHQRHRQRLQRQKH) are enriched in basic residues. The segment covering 470–486 (LSKEEREERKRLRQEQR) has biased composition (basic and acidic residues). Over residues 487–497 (QRRKQRRRQQQ) the composition is skewed to basic residues. Basic and acidic residues predominate over residues 505–514 (QEHRNKKDNS). Residues 570 to 583 (PQKTRSSNNASAGT) are compositionally biased toward polar residues. 2 N-linked (GlcNAc...) asparagine glycosylation sites follow: Asn-578 and Asn-612.

This sequence belongs to the pectinacetylesterase family. Notum subfamily.

It localises to the secreted. Its subcellular location is the cell surface. It carries out the reaction [Wnt protein]-O-(9Z)-hexadecenoyl-L-serine + H2O = [Wnt protein]-L-serine + (9Z)-hexadecenoate + H(+). Functionally, carboxylesterase that acts as a key negative regulator of the Wnt signaling pathway by specifically mediating depalmitoleoylation of WNT proteins. Serine palmitoleoylation of WNT proteins is required for efficient binding to frizzled receptors. Also acts as a regulator of long-range activity of Hedgehog (hh), possibly by regulating the switch between low and high level hh pathway signaling. In Drosophila melanogaster (Fruit fly), this protein is Palmitoleoyl-protein carboxylesterase NOTUM.